The chain runs to 1106 residues: Inversin (1106 aa).

ANK repeat units lie at residues 13–42, 47–76, 80–110, 113–144, 148–177, 181–213, 220–250, 254–285, 288–317, 321–350, 356–385, 389–418, 422–451, 455–484, 488–517, and 523–553; these read SLASEVHAAAVNGDKSTLLKLIAGNSELKD, FGRTPLMYCVLADRVDCAEALLKAGADVNR, SRRTALHLAAQKGNYRFMKLLLARRGNWMQK, EGMTPLHLTTRHKSPKCLALLLKHMAPGEVDT, NKQTALHWSAYYNNPEHVKLLIKHDSNIGI, EGKIPLHWAANNKDPSAIHTVKCILEAAPTESL, EGRTPLHFAVADGNVAVVDVLTSYEGCNVTS, LFRTPLHWAALLGHAQIVHLLLERNKFGTIPS, QGATPLHYAAQSNFAETVEVFLKHPSVKDD, EGRTSFMWAAGKGSDNVIRTMLDLKLDIDI, YAGTALHAAALSGHVSTVKLLLERNAQVDA, MKHTPLFRACEMGHKEVIQTLIKGGARVDL, DGHSPLHWAALGGNADVCQILIENKINPNV, AGRTPLQCAAYGGYINCMVVLLENNADPNI, EGRTALHWLCNNGYLDAIKLLLGFDAFPNH, and ERYTPLDYALLGEHHEVIQFMLEHGALSIAA. The D-box 1 signature appears at 490–498; it reads RTALHWLCN. Positions 555-584 constitute an IQ 1 domain; sequence QDIAAFKIQAVYKGYKVRKAFQERKNLLMK. The span at 589 to 607 shows a compositional bias: basic and acidic residues; that stretch reads RKDAAAKKREEESKRKEAS. Disordered regions lie at residues 589–615, 636–688, 746–782, and 809–833; these read RKDAAAKKREEESKRKEASLQKGMQNM, LQLS…ELQS, ANGTSAHGNRRHASACGTAGAGEKTRDQSLSSSGNRG, and AVPKSKRHQQKSRHKEVNYERCSPA. Composition is skewed to polar residues over residues 636–645 and 653–666; these read LQLSNKQTDL and VSASQIQLGRNSRG. The segment covering 812-822 has biased composition (basic residues); it reads KSKRHQQKSRH. The D-box 2 signature appears at 944–952; it reads RKELFRKKN. The IQ 2 domain occupies 951-980; the sequence is KNYAATVIQRTWRSYRLRQELSQLLSAKRQ.

As to quaternary structure, binds calmodulin via its IQ domains. Interacts with APC2.

It localises to the cytoplasm. The protein localises to the cytoskeleton. In terms of biological role, required for normal renal development and establishment of left-right axis. Probably acts as a molecular switch between different Wnt signaling pathways. Inhibits the canonical Wnt pathway by targeting cytoplasmic disheveled for degradation by the ubiquitin-proteasome. This suggests that it is required in renal development to oppose the repression of terminal differentiation of tubular epithelial cells by Wnt signaling. This chain is Inversin (INVS), found in Gallus gallus (Chicken).